A 288-amino-acid polypeptide reads, in one-letter code: Transmembrane protein 163 (288 aa).

The interval M1–E64 is disordered. Over M1–A87 the chain is Cytoplasmic. Position 11 is a phosphoserine (S11). Pro residues predominate over residues P12–G24. Low complexity predominate over residues H25–S42. The interval S41–S71 is required for interaction with MCOLN1. 4 positions are modified to phosphoserine: S45, S54, S56, and S60. A helical transmembrane segment spans residues L88–V108. Over S109–A115 the chain is Extracellular. Residues S116–W136 form a helical membrane-spanning segment. Residues R137–R149 lie on the Cytoplasmic side of the membrane. Residues E150–V170 traverse the membrane as a helical segment. Residues K171–D186 are Extracellular-facing. A helical transmembrane segment spans residues F187–F207. The Cytoplasmic portion of the chain corresponds to M208–R216. A helical transmembrane segment spans residues A217–L237. At S238 to S254 the chain is on the extracellular side. A helical membrane pass occupies residues I255–V275. At P276–E288 the chain is on the cytoplasmic side.

The protein belongs to the TMEM163 family. As to quaternary structure, homodimer. Interacts with MCOLN1. Interacts with SLC30A1, SLC30A2, SLC30A3 and SLC30A4. In terms of tissue distribution, widely expressed, with high expression in the brain, cerebellum, heart, lung and spleen. In the brain, mainly expressed in the glutaminergic neuron subpopulations.

The protein resides in the cytoplasmic vesicle. It localises to the secretory vesicle. Its subcellular location is the synaptic vesicle membrane. The protein localises to the early endosome membrane. It is found in the late endosome membrane. The protein resides in the lysosome membrane. It localises to the cell membrane. The enzyme catalyses Zn(2+)(in) = Zn(2+)(out). Its function is as follows. Zinc ion transporter that mediates zinc efflux and plays a crucial role in intracellular zinc homeostasis. Binds the divalent cations Zn(2+), Ni(2+), and to a minor extent Cu(2+). Is a functional modulator of P2X purinoceptors, including P2RX1, P2RX3, P2RX4 and P2RX7. Plays a role in central nervous system development and is required for myelination, and survival and proliferation of oligodendrocytes. The chain is Transmembrane protein 163 (Tmem163) from Mus musculus (Mouse).